The primary structure comprises 224 residues: Putative O-methyltransferase MLBr01075 (224 aa).

S-adenosyl-L-methionine is bound by residues Val-51, Glu-73, 75 to 76 (GT), Ser-81, Asp-99, and Ile-100. Asp-147 contributes to the substrate binding site. An S-adenosyl-L-methionine-binding site is contributed by Asp-149.

The protein belongs to the class I-like SAM-binding methyltransferase superfamily. Cation-dependent O-methyltransferase family.

This chain is Putative O-methyltransferase MLBr01075, found in Mycobacterium leprae (strain Br4923).